Reading from the N-terminus, the 65-residue chain is Alpha-conotoxine-like Am1.5 (65 aa).

Positions 1 to 21 (MGMRMMFTVFLLVVLATTVVS) are cleaved as a signal peptide. The propeptide occupies 22–46 (FMSGRAFRDRNAAAKVSDLIALKAR). Residue glutamate 49 is modified to 4-carboxyglutamate. Positions 52-54 (SHP) are ser-Xaa-Pro motif, crucial for potent interaction with nAChR. A 4-hydroxyproline mark is found at proline 54 and proline 61. Glutamate 62 bears the 4-carboxyglutamate mark.

This sequence belongs to the conotoxin A superfamily. Contains 2 disulfide bonds. In terms of tissue distribution, expressed by the venom duct.

The protein resides in the secreted. Its function is as follows. Alpha-conotoxins act on postsynaptic membranes, they bind to the nicotinic acetylcholine receptors (nAChR) and thus inhibit them. This is Alpha-conotoxine-like Am1.5 from Conus amadis (Amadis cone).